A 548-amino-acid polypeptide reads, in one-letter code: Eukaryotic translation initiation factor 3 subunit D (548 aa).

Position 53 is an N6-acetyllysine (lysine 53). Serine 161 is modified (phosphoserine). The tract at residues aspartate 285–proline 299 is RNA gate. The tract at residues proline 523–alanine 548 is disordered. Phosphoserine occurs at positions 528 and 529. Acidic residues predominate over residues serine 529–alanine 548.

This sequence belongs to the eIF-3 subunit D family. As to quaternary structure, component of the eukaryotic translation initiation factor 3 (eIF-3) complex, which is composed of 13 subunits: EIF3A, EIF3B, EIF3C, EIF3D, EIF3E, EIF3F, EIF3G, EIF3H, EIF3I, EIF3J, EIF3K, EIF3L and EIF3M. The eIF-3 complex appears to include 3 stable modules: module A is composed of EIF3A, EIF3B, EIF3G and EIF3I; module B is composed of EIF3F, EIF3H, and EIF3M; and module C is composed of EIF3C, EIF3D, EIF3E, EIF3K and EIF3L. EIF3C of module C binds EIF3B of module A and EIF3H of module B, thereby linking the three modules. EIF3J is a labile subunit that binds to the eIF-3 complex via EIF3B. The eIF-3 complex interacts with RPS6KB1 under conditions of nutrient depletion. Mitogenic stimulation leads to binding and activation of a complex composed of MTOR and RPTOR, leading to phosphorylation and release of RPS6KB1 and binding of EIF4B to eIF-3.

The protein resides in the cytoplasm. MRNA cap-binding component of the eukaryotic translation initiation factor 3 (eIF-3) complex, a complex required for several steps in the initiation of protein synthesis of a specialized repertoire of mRNAs. The eIF-3 complex associates with the 40S ribosome and facilitates the recruitment of eIF-1, eIF-1A, eIF-2:GTP:methionyl-tRNAi and eIF-5 to form the 43S pre-initiation complex (43S PIC). The eIF-3 complex stimulates mRNA recruitment to the 43S PIC and scanning of the mRNA for AUG recognition. The eIF-3 complex is also required for disassembly and recycling of post-termination ribosomal complexes and subsequently prevents premature joining of the 40S and 60S ribosomal subunits prior to initiation. The eIF-3 complex specifically targets and initiates translation of a subset of mRNAs involved in cell proliferation, including cell cycling, differentiation and apoptosis, and uses different modes of RNA stem-loop binding to exert either translational activation or repression. In the eIF-3 complex, EIF3D specifically recognizes and binds the 7-methylguanosine cap of a subset of mRNAs. In Bos taurus (Bovine), this protein is Eukaryotic translation initiation factor 3 subunit D.